A 217-amino-acid polypeptide reads, in one-letter code: MNLVLLGPPGGGKGTQAKRLQDKYGLVQLSTGDMLRAAVASGSEVGKKAKAVMDAGQLVSDEIVIAIIDERLDQADVAKGAIFDGFPRTVAQAEALDAMMAKKGKKLDFAIEIRVPDAYIVERITGRYTCAKCGAGYHDKFQLPQVAGKCDSCGGTEFARRPDDNVDTVTKRLDAYHAQTAPLLPYYDKKGSLKLVDGTMDIADVTKALEGILDASK.

ATP is bound at residue 10–15 (GGGKGT). The interval 30–59 (STGDMLRAAVASGSEVGKKAKAVMDAGQLV) is NMP. AMP-binding positions include Thr31, Arg36, 57–59 (QLV), 85–88 (GFPR), and Gln92. Residues 126-164 (GRYTCAKCGAGYHDKFQLPQVAGKCDSCGGTEFARRPDD) are LID. Residue Arg127 coordinates ATP. Positions 130, 133, 150, and 153 each coordinate Zn(2+). Positions 161 and 172 each coordinate AMP. Position 200 (Met200) interacts with ATP.

Belongs to the adenylate kinase family. In terms of assembly, monomer.

Its subcellular location is the cytoplasm. The catalysed reaction is AMP + ATP = 2 ADP. It participates in purine metabolism; AMP biosynthesis via salvage pathway; AMP from ADP: step 1/1. In terms of biological role, catalyzes the reversible transfer of the terminal phosphate group between ATP and AMP. Plays an important role in cellular energy homeostasis and in adenine nucleotide metabolism. The chain is Adenylate kinase from Paramagnetospirillum magneticum (strain ATCC 700264 / AMB-1) (Magnetospirillum magneticum).